The sequence spans 202 residues: Adenylyl-sulfate kinase (202 aa).

G35 to S42 contacts ATP. The active-site Phosphoserine intermediate is the S109.

This sequence belongs to the APS kinase family.

The catalysed reaction is adenosine 5'-phosphosulfate + ATP = 3'-phosphoadenylyl sulfate + ADP + H(+). Its pathway is sulfur metabolism; hydrogen sulfide biosynthesis; sulfite from sulfate: step 2/3. In terms of biological role, catalyzes the synthesis of activated sulfate. In Bacteroides fragilis (strain YCH46), this protein is Adenylyl-sulfate kinase.